Here is a 150-residue protein sequence, read N- to C-terminus: Dual specificity protein phosphatase 23 (150 aa).

Positions 7 to 150 constitute a Tyrosine-protein phosphatase domain; that stretch reads NFSWVLPGRL…AVFQFYQRTK (144 aa). The Phosphocysteine intermediate role is filled by Cys95.

It belongs to the protein-tyrosine phosphatase family. Non-receptor class dual specificity subfamily. As to expression, widely expressed.

It localises to the cytoplasm. It is found in the cytosol. The protein resides in the nucleus. The enzyme catalyses O-phospho-L-tyrosyl-[protein] + H2O = L-tyrosyl-[protein] + phosphate. It catalyses the reaction O-phospho-L-seryl-[protein] + H2O = L-seryl-[protein] + phosphate. It carries out the reaction O-phospho-L-threonyl-[protein] + H2O = L-threonyl-[protein] + phosphate. Functionally, protein phosphatase that mediates dephosphorylation of proteins phosphorylated on Tyr and Ser/Thr residues. In vitro, it can dephosphorylate p44-ERK1 (MAPK3) but not p54 SAPK-beta (MAPK10) in vitro. Able to enhance activation of JNK and p38 (MAPK14). The sequence is that of Dual specificity protein phosphatase 23 (Dusp23) from Mus musculus (Mouse).